We begin with the raw amino-acid sequence, 198 residues long: FMN-dependent NADH:quinone oxidoreductase (198 aa).

FMN is bound by residues serine 10, 16–18 (SQS), 94–97 (MYNF), and 138–141 (TRGG).

This sequence belongs to the azoreductase type 1 family. As to quaternary structure, homodimer. It depends on FMN as a cofactor.

The enzyme catalyses 2 a quinone + NADH + H(+) = 2 a 1,4-benzosemiquinone + NAD(+). The catalysed reaction is N,N-dimethyl-1,4-phenylenediamine + anthranilate + 2 NAD(+) = 2-(4-dimethylaminophenyl)diazenylbenzoate + 2 NADH + 2 H(+). Its function is as follows. Quinone reductase that provides resistance to thiol-specific stress caused by electrophilic quinones. Functionally, also exhibits azoreductase activity. Catalyzes the reductive cleavage of the azo bond in aromatic azo compounds to the corresponding amines. This Shewanella sp. (strain MR-4) protein is FMN-dependent NADH:quinone oxidoreductase.